Reading from the N-terminus, the 190-residue chain is COMM domain-containing protein 1 (190 aa).

The residue at position 2 (alanine 2) is an N-acetylalanine. Residues alanine 2–serine 123 are sufficient for interaction with SLC12A2. Cu cation is bound by residues histidine 101, methionine 110, and histidine 134. In terms of domain architecture, COMM spans glycine 118–isoleucine 186. The tract at residues arginine 125–asparagine 190 is required for binding to PtdIns(4,5)P2.

It belongs to the COMM domain-containing protein 1 family. In terms of assembly, component of the commander complex consisting of the CCC subcomplex and the retriever subcomplex. Component of the CCC (COMMD/CCDC22/CCDC93) subcomplex consisting of COMMD1, COMMD2, COMMD3, COMMD4, COMMD5, COMMD6, COMMD7, COMMD8, COMMD9, COMMD10, CCDC22 and CCDC93; within the complex forms a heterodimer with COMMD6. Interacts with VPS35L; the interaction associates the CCC complex with the retriever complex. Identified in a complex with an E3 ubiquitin ligase complex composed of TCEB1/elongin C, CUL2, SOCS1 and RBX1; in the complex interacts directly with SOCS1 and CUL2. Identified in a complex with NF-kappa-B. Interacts directly with SLC12A2. Interacts directly with ATP7B (via the N-terminal region). Interacts with ATP7A. Interacts with FAM107A; this interaction stabilizes COMMD1 in the nucleus. Interacts with CCS, CDKN2A, RELA, REL, RELB, NFKB1/p105, NFKB2/p100, NFKBIB, SCNN1D, SCNN1B, CFTR, CLU, SGK1, AKT1, CUL1, CUL2, CUL3, CUL4A, CUL4B, CUL5, CUL7, HIF1A. In terms of processing, acetylated by EP300 ina stimuli-specific manner; protecting it from XIAP-mediated proteasomal degradation and required for interaction with RElA in response to stress. Post-translationally, ubiquitinated; undergoes both 'Lys-63'- and 'Lys-48'-linked polyubiquitination. Ubiquitinated by XIAP, leading to its proteasomal degradation. As to expression, ubiquitous. Highest expression in the liver, with lower expression in brain, lung, placenta, pancreas, small intestine, heart, skeletal muscle, kidney and placenta. Down-regulated in cancer tissues.

The protein localises to the nucleus. The protein resides in the cytoplasm. It is found in the endosome membrane. It localises to the cytoplasmic vesicle. Its subcellular location is the early endosome. The protein localises to the recycling endosome. Functionally, scaffold protein in the commander complex that is essential for endosomal recycling of transmembrane cargos; the commander complex is composed of the CCC subcomplex and the retriever subcomplex. Can modulate activity of cullin-RING E3 ubiquitin ligase (CRL) complexes by displacing CAND1; in vitro promotes CRL E3 activity and dissociates CAND1 from CUL1 and CUL2. Promotes ubiquitination of NF-kappa-B subunit RELA and its subsequent proteasomal degradation. Down-regulates NF-kappa-B activity. Involved in the regulation of membrane expression and ubiquitination of SLC12A2. Modulates Na(+) transport in epithelial cells by regulation of apical cell surface expression of amiloride-sensitive sodium channel (ENaC) subunits and by promoting their ubiquitination presumably involving NEDD4L. Promotes the localization of SCNN1D to recycling endosomes. Promotes CFTR cell surface expression through regulation of its ubiquitination. Down-regulates SOD1 activity by interfering with its homodimerization. Plays a role in copper ion homeostasis. Involved in copper-dependent ATP7A trafficking between the trans-Golgi network and vesicles in the cell periphery; the function is proposed to depend on its association within the CCC complex and cooperation with the WASH complex on early endosomes. Can bind one copper ion per monomer. May function to facilitate biliary copper excretion within hepatocytes. Binds to phosphatidylinositol 4,5-bisphosphate (PtdIns(4,5)P2). Involved in the regulation of HIF1A-mediated transcription; competes with ARNT/Hif-1-beta for binding to HIF1A resulting in decreased DNA binding and impaired transcriptional activation by HIF-1. Negatively regulates neuroblastoma G1/S phase cell cycle progression and cell proliferation by stimulating ubiquitination of NF-kappa-B subunit RELA and NF-kappa-B degradation in a FAM107A- and actin-dependent manner. The sequence is that of COMM domain-containing protein 1 (COMMD1) from Homo sapiens (Human).